The following is a 417-amino-acid chain: Serine hydroxymethyltransferase (417 aa).

(6S)-5,6,7,8-tetrahydrofolate is bound by residues L117 and 121–123; that span reads GHL. K226 carries the N6-(pyridoxal phosphate)lysine modification.

It belongs to the SHMT family. In terms of assembly, homodimer. It depends on pyridoxal 5'-phosphate as a cofactor.

Its subcellular location is the cytoplasm. It catalyses the reaction (6R)-5,10-methylene-5,6,7,8-tetrahydrofolate + glycine + H2O = (6S)-5,6,7,8-tetrahydrofolate + L-serine. Its pathway is one-carbon metabolism; tetrahydrofolate interconversion. It participates in amino-acid biosynthesis; glycine biosynthesis; glycine from L-serine: step 1/1. Catalyzes the reversible interconversion of serine and glycine with tetrahydrofolate (THF) serving as the one-carbon carrier. This reaction serves as the major source of one-carbon groups required for the biosynthesis of purines, thymidylate, methionine, and other important biomolecules. Also exhibits THF-independent aldolase activity toward beta-hydroxyamino acids, producing glycine and aldehydes, via a retro-aldol mechanism. The sequence is that of Serine hydroxymethyltransferase from Syntrophus aciditrophicus (strain SB).